The following is an 85-amino-acid chain: ATP synthase epsilon chain (85 aa).

It belongs to the ATPase epsilon chain family. F-type ATPases have 2 components, CF(1) - the catalytic core - and CF(0) - the membrane proton channel. CF(1) has five subunits: alpha(3), beta(3), gamma(1), delta(1), epsilon(1). CF(0) has three main subunits: a, b and c.

It is found in the cell membrane. In terms of biological role, produces ATP from ADP in the presence of a proton gradient across the membrane. The protein is ATP synthase epsilon chain of Frankia casuarinae (strain DSM 45818 / CECT 9043 / HFP020203 / CcI3).